The chain runs to 119 residues: NADH-quinone oxidoreductase subunit A (119 aa).

The next 3 helical transmembrane spans lie at 9–29, 63–83, and 88–108; these read VILF…LGFL, LVAI…PWAV, and IGAT…VGFV.

Belongs to the complex I subunit 3 family. NDH-1 is composed of 14 different subunits. Subunits NuoA, H, J, K, L, M, N constitute the membrane sector of the complex.

The protein resides in the cell inner membrane. The catalysed reaction is a quinone + NADH + 5 H(+)(in) = a quinol + NAD(+) + 4 H(+)(out). Functionally, NDH-1 shuttles electrons from NADH, via FMN and iron-sulfur (Fe-S) centers, to quinones in the respiratory chain. The immediate electron acceptor for the enzyme in this species is believed to be ubiquinone. Couples the redox reaction to proton translocation (for every two electrons transferred, four hydrogen ions are translocated across the cytoplasmic membrane), and thus conserves the redox energy in a proton gradient. The protein is NADH-quinone oxidoreductase subunit A of Leptothrix cholodnii (strain ATCC 51168 / LMG 8142 / SP-6) (Leptothrix discophora (strain SP-6)).